A 61-amino-acid chain; its full sequence is Small ribosomal subunit protein uS14 (61 aa).

Positions 24, 27, 40, and 43 each coordinate Zn(2+).

The protein belongs to the universal ribosomal protein uS14 family. Zinc-binding uS14 subfamily. Part of the 30S ribosomal subunit. Contacts proteins S3 and S10. It depends on Zn(2+) as a cofactor.

Binds 16S rRNA, required for the assembly of 30S particles and may also be responsible for determining the conformation of the 16S rRNA at the A site. In Clostridium perfringens (strain ATCC 13124 / DSM 756 / JCM 1290 / NCIMB 6125 / NCTC 8237 / Type A), this protein is Small ribosomal subunit protein uS14.